A 508-amino-acid chain; its full sequence is Mitochondrial distribution and morphology protein 10 (508 aa).

The segment at 160 to 195 is disordered; that stretch reads PAHPTSTRPTPPQTPPSHTRQPSEPSTPAPSPTPGN.

Belongs to the MDM10 family. Component of the ER-mitochondria encounter structure (ERMES) or MDM complex, composed of MMM1, MDM10, MDM12 and MDM34. Associates with the mitochondrial outer membrane sorting assembly machinery SAM(core) complex.

It localises to the mitochondrion outer membrane. Functionally, component of the ERMES/MDM complex, which serves as a molecular tether to connect the endoplasmic reticulum and mitochondria. Components of this complex are involved in the control of mitochondrial shape and protein biogenesis and may function in phospholipid exchange. MDM10 is involved in the late assembly steps of the general translocase of the mitochondrial outer membrane (TOM complex). Functions in the TOM40-specific route of the assembly of outer membrane beta-barrel proteins, including the association of TOM40 with the receptor TOM22 and small TOM proteins. Can associate with the SAM(core) complex as well as the MDM12-MMM1 complex, both involved in late steps of the major beta-barrel assembly pathway, that is responsible for biogenesis of all outer membrane beta-barrel proteins. May act as a switch that shuttles between both complexes and channels precursor proteins into the TOM40-specific pathway. Plays a role in mitochondrial morphology and in the inheritance of mitochondria. The polypeptide is Mitochondrial distribution and morphology protein 10 (Cryptococcus neoformans var. neoformans serotype D (strain JEC21 / ATCC MYA-565) (Filobasidiella neoformans)).